The chain runs to 723 residues: Catalase-peroxidase (723 aa).

Positions 96-224 form a cross-link, tryptophyl-tyrosyl-methioninium (Trp-Tyr) (with M-250); that stretch reads WHAAGSYRVA…LAAVMMGLIY (129 aa). Histidine 97 acts as the Proton acceptor in catalysis. The tryptophyl-tyrosyl-methioninium (Tyr-Met) (with W-96) cross-link spans 224–250; that stretch reads YVNPEGVDGQPDPLKTAQDVRVTFARM. Histidine 265 is a heme b binding site.

The protein belongs to the peroxidase family. Peroxidase/catalase subfamily. Homodimer or homotetramer. It depends on heme b as a cofactor. Post-translationally, formation of the three residue Trp-Tyr-Met cross-link is important for the catalase, but not the peroxidase activity of the enzyme.

The catalysed reaction is H2O2 + AH2 = A + 2 H2O. It catalyses the reaction 2 H2O2 = O2 + 2 H2O. Bifunctional enzyme with both catalase and broad-spectrum peroxidase activity. The sequence is that of Catalase-peroxidase from Leptothrix cholodnii (strain ATCC 51168 / LMG 8142 / SP-6) (Leptothrix discophora (strain SP-6)).